Here is a 180-residue protein sequence, read N- to C-terminus: tRNA (cytidine(56)-2'-O)-methyltransferase (180 aa).

Residues Leu-83, 115–119 (GAEKV), and 133–140 (VGNQPHSE) contribute to the S-adenosyl-L-methionine site.

It belongs to the aTrm56 family. In terms of assembly, homodimer.

It localises to the cytoplasm. It catalyses the reaction cytidine(56) in tRNA + S-adenosyl-L-methionine = 2'-O-methylcytidine(56) in tRNA + S-adenosyl-L-homocysteine + H(+). Functionally, specifically catalyzes the AdoMet-dependent 2'-O-ribose methylation of cytidine at position 56 in tRNAs. The chain is tRNA (cytidine(56)-2'-O)-methyltransferase from Methanococcus aeolicus (strain ATCC BAA-1280 / DSM 17508 / OCM 812 / Nankai-3).